A 280-amino-acid polypeptide reads, in one-letter code: uncharacterized protein (280 aa).

3 helical membrane-spanning segments follow: residues 15-35, 68-88, and 94-114; these read IVDILLVAVILWIGVFIINRL, IGFIFYVISLFVHDFGKILAG, and IVIGFGAQSLIKDVLAGVFLI.

It belongs to the MscS (TC 1.A.23) family.

Its subcellular location is the cell membrane. Functionally, may play a role in resistance to osmotic downshock. This is an uncharacterized protein from Bacillus subtilis (strain 168).